We begin with the raw amino-acid sequence, 55 residues long: Caltrin-like protein 2 (55 aa).

The WAP domain occupies 7–55 (AINRPGSCPRVMIYCPARHPPNKCTSDYDCPKPQKCCPGYCGKQCYQPE).

In terms of processing, glycosylated.

Its function is as follows. Inhibits calcium transport into spermatozoa. This Cavia porcellus (Guinea pig) protein is Caltrin-like protein 2.